A 354-amino-acid chain; its full sequence is Uroporphyrinogen decarboxylase (354 aa).

Residues 27-31, D77, Y154, T209, and H327 each bind substrate; that span reads RQAGR.

Belongs to the uroporphyrinogen decarboxylase family. As to quaternary structure, homodimer.

Its subcellular location is the cytoplasm. The enzyme catalyses uroporphyrinogen III + 4 H(+) = coproporphyrinogen III + 4 CO2. The protein operates within porphyrin-containing compound metabolism; protoporphyrin-IX biosynthesis; coproporphyrinogen-III from 5-aminolevulinate: step 4/4. Functionally, catalyzes the decarboxylation of four acetate groups of uroporphyrinogen-III to yield coproporphyrinogen-III. The sequence is that of Uroporphyrinogen decarboxylase from Mannheimia succiniciproducens (strain KCTC 0769BP / MBEL55E).